The sequence spans 197 residues: uncharacterized protein (197 aa).

The interval 1–135 (MKTPWKFLAR…ERGKRANARV (135 aa)) is disordered. The segment covering 14–32 (RQPSGKTQESSAGNDTGSK) has biased composition (polar residues). Residues 83-96 (IHADEAQTTARDEA) show a composition bias toward basic and acidic residues. Basic residues predominate over residues 116 to 132 (SQRKPRIKRRERGKRAN).

The protein to Rhizobium NGR234A y4nF and y4aO.

This is an uncharacterized protein from Rhizobium meliloti (strain 1021) (Ensifer meliloti).